Here is a 242-residue protein sequence, read N- to C-terminus: uncharacterized protein (242 aa).

One can recognise an S4 RNA-binding domain in the interval 2–69 (YRLAKIISNA…KPRLWIYYKP (68 aa)). The Nucleophile role is filled by D102.

It belongs to the pseudouridine synthase RsuA family.

It carries out the reaction a uridine in RNA = a pseudouridine in RNA. This is an uncharacterized protein from Rickettsia typhi (strain ATCC VR-144 / Wilmington).